Reading from the N-terminus, the 469-residue chain is MKNFSEWFHNILEEAELMDARYPIKGMSVWLPRGFQIRKYALNALQELLDKDHEEVLFPMLIPQSELAKEAIHVKGFEEEVYWVTKGGKRDLNEHLALRPTSETSIYPMFSLWVRSHMDLPIKVYQTVNTFRYETKHTRPLIRVREITTFNETHTAHATEEEAEKEVMEGIEIYKTFFDELGIPYSISKRPEWDKFPGSKYTMAFDMIMPDGKTLQIATVHNLGTTFAHTFDIQFENEDGTHDYVHQVCYGLSDRVIASLIAAHGDEKGLSLPPVVAPEQVIIIPIIFKENQDVVLNFTDNLEKLLKNNGIRVKQDKRELRPGKKYYEWEKRGVPLRIEVGPRDIENNTIVINRRDTGDKEFVDYDENTIVDVVKDRLDSITHDMKEASNKFQEEKTFAIEKPEQIKKTINKKGGIITCSWCGETDCGKDMEEKFDIDVLGTQESDLENKTCINCGKDASYKVLISKTY.

It belongs to the class-II aminoacyl-tRNA synthetase family. ProS type 3 subfamily. As to quaternary structure, homodimer.

The protein resides in the cytoplasm. It catalyses the reaction tRNA(Pro) + L-proline + ATP = L-prolyl-tRNA(Pro) + AMP + diphosphate. In terms of biological role, catalyzes the attachment of proline to tRNA(Pro) in a two-step reaction: proline is first activated by ATP to form Pro-AMP and then transferred to the acceptor end of tRNA(Pro). This Methanosphaera stadtmanae (strain ATCC 43021 / DSM 3091 / JCM 11832 / MCB-3) protein is Proline--tRNA ligase.